Consider the following 73-residue polypeptide: Mu-sparatoxin-Hv2 (73 aa).

Positions 1-20 (MKFAIVITLLLVAFSAVALA) are cleaved as a signal peptide. Residues 21 to 35 (DKSIERAVMDLITAR) constitute a propeptide that is removed on maturation. 3 disulfide bridges follow: Cys-39/Cys-53, Cys-46/Cys-58, and Cys-52/Cys-68. Phe-72 is modified (phenylalanine amide).

The protein belongs to the neurotoxin 10 (Hwtx-1) family. In terms of tissue distribution, expressed by the venom gland.

The protein resides in the secreted. In terms of biological role, insecticidal toxin that potently and irreversibly blocks voltage-gated sodium channels (Nav) in cockroach dorsal unpaired median (DUM) neurons (IC(50)=833.7 nM). It does not change both the steady-state activation and inactivation curves, suggesting it acts as a pore blocker (possibly at Nav site 1). Does not show toxicity when intraperitoneally injected into mouse. The chain is Mu-sparatoxin-Hv2 from Heteropoda venatoria (Brown huntsman spider).